Reading from the N-terminus, the 387-residue chain is 3-ketoacyl-CoA thiolase (387 aa).

C91 serves as the catalytic Acyl-thioester intermediate. Active-site proton acceptor residues include H343 and C373.

Belongs to the thiolase-like superfamily. Thiolase family. As to quaternary structure, heterotetramer of two alpha chains (FadB) and two beta chains (FadA).

Its subcellular location is the cytoplasm. It carries out the reaction an acyl-CoA + acetyl-CoA = a 3-oxoacyl-CoA + CoA. It participates in lipid metabolism; fatty acid beta-oxidation. Functionally, catalyzes the final step of fatty acid oxidation in which acetyl-CoA is released and the CoA ester of a fatty acid two carbons shorter is formed. The sequence is that of 3-ketoacyl-CoA thiolase from Shewanella baltica (strain OS185).